The sequence spans 457 residues: COBRA-like protein 3 (457 aa).

The first 35 residues, 1–35 (MAVGGAGSSRSVAPCCCCAVLLAAALLFSAPATTE), serve as a signal peptide directing secretion. N-linked (GlcNAc...) asparagine glycans are attached at residues N45, N170, N178, N217, N242, N258, N326, N341, and N361. The GPI-anchor amidated asparagine moiety is linked to residue N430. Residues 431–457 (ASPLTKQPLTLSVLVFSIVLATLLAYA) constitute a propeptide, removed in mature form. The helical transmembrane segment at 437 to 457 (QPLTLSVLVFSIVLATLLAYA) threads the bilayer.

Belongs to the COBRA family.

It is found in the cell membrane. In terms of biological role, involved in determining the orientation of cell expansion, probably by playing an important role in cellulose deposition. May act by recruiting cellulose synthesizing complexes to discrete positions on the cell surface. This Oryza sativa subsp. japonica (Rice) protein is COBRA-like protein 3 (BC1L4).